Here is a 375-residue protein sequence, read N- to C-terminus: Acetylornithine aminotransferase (375 aa).

Pyridoxal 5'-phosphate contacts are provided by residues 93–94 (GT) and Phe120. Arg123 lines the N(2)-acetyl-L-ornithine pocket. Residue 205 to 208 (DEVQ) coordinates pyridoxal 5'-phosphate. Residue Lys234 is modified to N6-(pyridoxal phosphate)lysine. Thr262 provides a ligand contact to N(2)-acetyl-L-ornithine. Thr263 lines the pyridoxal 5'-phosphate pocket.

It belongs to the class-III pyridoxal-phosphate-dependent aminotransferase family. ArgD subfamily. Homodimer. Pyridoxal 5'-phosphate serves as cofactor.

It localises to the cytoplasm. It catalyses the reaction N(2)-acetyl-L-ornithine + 2-oxoglutarate = N-acetyl-L-glutamate 5-semialdehyde + L-glutamate. The protein operates within amino-acid biosynthesis; L-arginine biosynthesis; N(2)-acetyl-L-ornithine from L-glutamate: step 4/4. This chain is Acetylornithine aminotransferase, found in Staphylococcus epidermidis (strain ATCC 12228 / FDA PCI 1200).